The chain runs to 537 residues: Phosphoenolpyruvate carboxykinase (ATP) (537 aa).

Residues arginine 61, tyrosine 195, and lysine 201 each contribute to the substrate site. ATP-binding positions include lysine 201, histidine 220, and 236 to 244; that span reads GLSGTGKTT. 2 residues coordinate Mn(2+): lysine 201 and histidine 220. Mn(2+) is bound at residue aspartate 257. ATP is bound by residues glutamate 285, arginine 323, and threonine 448. Arginine 323 is a substrate binding site.

Belongs to the phosphoenolpyruvate carboxykinase (ATP) family. It depends on Mn(2+) as a cofactor.

It localises to the cytoplasm. It carries out the reaction oxaloacetate + ATP = phosphoenolpyruvate + ADP + CO2. It functions in the pathway carbohydrate biosynthesis; gluconeogenesis. Involved in the gluconeogenesis. Catalyzes the conversion of oxaloacetate (OAA) to phosphoenolpyruvate (PEP) through direct phosphoryl transfer between the nucleoside triphosphate and OAA. This is Phosphoenolpyruvate carboxykinase (ATP) from Rhodopseudomonas palustris (strain ATCC BAA-98 / CGA009).